The sequence spans 66 residues: Ocellatin-PT5 (66 aa).

The signal sequence occupies residues 1–22 (MAFLKKSLFLVLFLGLVSLSIC). Positions 23-39 (DEEKRQDEDDDDDDDEE) are excised as a propeptide. Valine 66 is modified (valine amide).

In terms of tissue distribution, expressed by the skin glands.

It localises to the secreted. Has antibacterial activity against Gram-negative bacterium E.coli ATCC 25922 (MIC=300 uM) but not against S.pneumoniae ATCC 700603, S.choleraesuis ATCC 14028 or Gram-positive bacterium S.aureus ATCC 29313. Shows very little hemolytic activity and no cytotoxicity. In Leptodactylus pustulatus (Ceara white-lipped frog), this protein is Ocellatin-PT5.